The following is a 434-amino-acid chain: 26S proteasome regulatory subunit 6A (434 aa).

A2 bears the N-acetylalanine mark. Y180 carries the phosphotyrosine modification. 222 to 229 is an ATP binding site; sequence GPPGTGKT.

The protein belongs to the AAA ATPase family. N-acetylated by NAT1.

Its subcellular location is the cytoplasm. It localises to the nucleus. In terms of biological role, the 26S proteasome is involved in the ATP-dependent degradation of ubiquitinated proteins. The regulatory (or ATPase) complex confers ATP dependency and substrate specificity to the 26S complex. This is 26S proteasome regulatory subunit 6A (RPT5) from Saccharomyces cerevisiae (strain ATCC 204508 / S288c) (Baker's yeast).